Here is a 266-residue protein sequence, read N- to C-terminus: Putative zinc finger protein 034R (266 aa).

The interval 84-176 is disordered; it reads SPTKSVDKAA…GPKRDSTQQP (93 aa). The segment covering 88–100 has biased composition (basic and acidic residues); it reads SVDKAAQKEKKMP. Polar residues-rich tracts occupy residues 105–119 and 160–176; these read KPTTVTPTRNEQGIL and GVSQQQQGPKRDSTQQP. The C3H1-type zinc finger occupies 180–192; it reads CKSVLKQAKCYFG.

The protein belongs to the IIV-6 077L family.

The polypeptide is Putative zinc finger protein 034R (Aedes vexans (Inland floodwater mosquito)).